Reading from the N-terminus, the 267-residue chain is tRNA pseudouridine synthase A (267 aa).

The Nucleophile role is filled by aspartate 51. Tyrosine 109 is a substrate binding site.

It belongs to the tRNA pseudouridine synthase TruA family. Homodimer.

It carries out the reaction uridine(38/39/40) in tRNA = pseudouridine(38/39/40) in tRNA. Formation of pseudouridine at positions 38, 39 and 40 in the anticodon stem and loop of transfer RNAs. This chain is tRNA pseudouridine synthase A, found in Staphylococcus aureus (strain Mu3 / ATCC 700698).